Reading from the N-terminus, the 61-residue chain is UPF0434 protein PFL_1779 (61 aa).

Belongs to the UPF0434 family.

This is UPF0434 protein PFL_1779 from Pseudomonas fluorescens (strain ATCC BAA-477 / NRRL B-23932 / Pf-5).